A 181-amino-acid chain; its full sequence is Shikimate kinase (181 aa).

17–22 (GVGKTT) is an ATP binding site. T21 provides a ligand contact to Mg(2+). 3 residues coordinate substrate: D39, R63, and G85. Residue R122 coordinates ATP. R141 is a binding site for substrate.

This sequence belongs to the shikimate kinase family. Monomer. Mg(2+) is required as a cofactor.

The protein localises to the cytoplasm. The catalysed reaction is shikimate + ATP = 3-phosphoshikimate + ADP + H(+). Its pathway is metabolic intermediate biosynthesis; chorismate biosynthesis; chorismate from D-erythrose 4-phosphate and phosphoenolpyruvate: step 5/7. Catalyzes the specific phosphorylation of the 3-hydroxyl group of shikimic acid using ATP as a cosubstrate. The protein is Shikimate kinase of Nostoc punctiforme (strain ATCC 29133 / PCC 73102).